The primary structure comprises 341 residues: L-threonine 3-dehydrogenase (341 aa).

Cys38 contributes to the Zn(2+) binding site. Catalysis depends on charge relay system residues Thr40 and His43. 6 residues coordinate Zn(2+): His63, Glu64, Cys93, Cys96, Cys99, and Cys107. Residues Ile175, Asp195, Arg200, 262–264 (LGI), and 286–287 (IY) contribute to the NAD(+) site.

The protein belongs to the zinc-containing alcohol dehydrogenase family. As to quaternary structure, homotetramer. The cofactor is Zn(2+).

It is found in the cytoplasm. It carries out the reaction L-threonine + NAD(+) = (2S)-2-amino-3-oxobutanoate + NADH + H(+). It participates in amino-acid degradation; L-threonine degradation via oxydo-reductase pathway; glycine from L-threonine: step 1/2. In terms of biological role, catalyzes the NAD(+)-dependent oxidation of L-threonine to 2-amino-3-ketobutyrate. The protein is L-threonine 3-dehydrogenase of Escherichia fergusonii (strain ATCC 35469 / DSM 13698 / CCUG 18766 / IAM 14443 / JCM 21226 / LMG 7866 / NBRC 102419 / NCTC 12128 / CDC 0568-73).